Consider the following 92-residue polypeptide: Small ribosomal subunit protein uS19 (92 aa).

Belongs to the universal ribosomal protein uS19 family.

Functionally, protein S19 forms a complex with S13 that binds strongly to the 16S ribosomal RNA. The chain is Small ribosomal subunit protein uS19 from Beijerinckia indica subsp. indica (strain ATCC 9039 / DSM 1715 / NCIMB 8712).